A 259-amino-acid chain; its full sequence is Phosphatidylglycerol--prolipoprotein diacylglyceryl transferase (259 aa).

The next 4 helical transmembrane spans lie at 12–32 (LSLH…VYLA), 46–66 (IIDF…IYYV), 83–103 (IWNG…VLFV), and 109–129 (VLNP…AQAI). Arg-131 is a binding site for a 1,2-diacyl-sn-glycero-3-phospho-(1'-sn-glycerol). 3 consecutive transmembrane segments (helical) span residues 167–187 (VPTF…IMVW), 194–214 (LVDG…RLVI), and 226–246 (GIRV…VFIF).

Belongs to the Lgt family.

Its subcellular location is the cell membrane. The catalysed reaction is L-cysteinyl-[prolipoprotein] + a 1,2-diacyl-sn-glycero-3-phospho-(1'-sn-glycerol) = an S-1,2-diacyl-sn-glyceryl-L-cysteinyl-[prolipoprotein] + sn-glycerol 1-phosphate + H(+). It functions in the pathway protein modification; lipoprotein biosynthesis (diacylglyceryl transfer). Catalyzes the transfer of the diacylglyceryl group from phosphatidylglycerol to the sulfhydryl group of the N-terminal cysteine of a prolipoprotein, the first step in the formation of mature lipoproteins. The sequence is that of Phosphatidylglycerol--prolipoprotein diacylglyceryl transferase from Streptococcus equi subsp. equi (strain 4047).